A 345-amino-acid polypeptide reads, in one-letter code: Probable G-protein coupled receptor 139 (345 aa).

Residues 1–21 (MEHTHAHLAANSSACGLGFVP) are Extracellular-facing. An N-linked (GlcNAc...) asparagine glycan is attached at Asn-11. The chain crosses the membrane as a helical span at residues 22–42 (VVYYSFLLCLGLPANILTVII). Over 43–57 (LSQLVARRQKSSYNY) the chain is Cytoplasmic. The helical transmembrane segment at 58-78 (LLALAAADILVLFFIVFVDFL) threads the bilayer. Over 79–94 (LEDFILTMQMPLIPDK) the chain is Extracellular. A helical membrane pass occupies residues 95–115 (IIEVLEFSSIHTSIWITVPLT). The Cytoplasmic segment spans residues 116–140 (VDRYIAVCHPLKYHTVSYPARTRKV). The chain crosses the membrane as a helical span at residues 141–161 (ILSVYITCFLTSIPYYWWPNI). The Extracellular segment spans residues 162–173 (WTEDYISTSMHH). The helical transmembrane segment at 174 to 194 (VLVWIHCFTVYLVPCSIFFIL) threads the bilayer. Residues 195–220 (NSIIVYKLRRKSNFRLRGYSTGKTTA) are Cytoplasmic-facing. A helical membrane pass occupies residues 221–241 (ILFTITSIFATLWAPRIIMIL). Residues 242 to 260 (YHLYGAPIQNPWLVHIMLD) are Extracellular-facing. A helical membrane pass occupies residues 261-281 (VANMLALLNTAINFFLYCFIS). At 282–345 (KRFRTMAAAT…KHGKPIKVSP (64 aa)) the chain is on the cytoplasmic side.

It belongs to the G-protein coupled receptor 1 family. In terms of tissue distribution, expressed almost exclusively in the brain. Abundantly expressed in the ventrolateral region of caudate putamen, the habenular nucleus, the zona incerta, and the medial mammillary nucleus.

The protein localises to the cell membrane. Orphan receptor. Seems to act through a G(q/11)-mediated pathway. In Mus musculus (Mouse), this protein is Probable G-protein coupled receptor 139 (Gpr139).